The chain runs to 246 residues: UDP-N-acetyl-D-mannosaminuronic acid transferase (246 aa).

It belongs to the glycosyltransferase 26 family.

It catalyses the reaction UDP-N-acetyl-alpha-D-mannosaminouronate + N-acetyl-alpha-D-glucosaminyl-di-trans,octa-cis-undecaprenyl diphosphate = beta-D-ManNAcA-(1-&gt;4)-alpha-D-GlcNAc-di-trans,octa-cis-undecaprenyl diphosphate + UDP + H(+). Its pathway is bacterial outer membrane biogenesis; enterobacterial common antigen biosynthesis. Catalyzes the synthesis of Und-PP-GlcNAc-ManNAcA (Lipid II), the second lipid-linked intermediate involved in enterobacterial common antigen (ECA) synthesis. This chain is UDP-N-acetyl-D-mannosaminuronic acid transferase, found in Escherichia coli (strain 55989 / EAEC).